Reading from the N-terminus, the 940-residue chain is Isoleucine--tRNA ligase (940 aa).

A 'HIGH' region motif is present at residues 58–68 (PYANGSIHIGH). E564 lines the L-isoleucyl-5'-AMP pocket. The short motif at 605 to 609 (KMSKS) is the 'KMSKS' region element. K608 lines the ATP pocket. Residues C903, C906, C923, and C926 each contribute to the Zn(2+) site.

The protein belongs to the class-I aminoacyl-tRNA synthetase family. IleS type 1 subfamily. Monomer. It depends on Zn(2+) as a cofactor.

The protein resides in the cytoplasm. The catalysed reaction is tRNA(Ile) + L-isoleucine + ATP = L-isoleucyl-tRNA(Ile) + AMP + diphosphate. In terms of biological role, catalyzes the attachment of isoleucine to tRNA(Ile). As IleRS can inadvertently accommodate and process structurally similar amino acids such as valine, to avoid such errors it has two additional distinct tRNA(Ile)-dependent editing activities. One activity is designated as 'pretransfer' editing and involves the hydrolysis of activated Val-AMP. The other activity is designated 'posttransfer' editing and involves deacylation of mischarged Val-tRNA(Ile). This Shewanella sp. (strain ANA-3) protein is Isoleucine--tRNA ligase.